Consider the following 344-residue polypeptide: Serine proteinase inhibitor 2 (344 aa).

It belongs to the serpin family. Poxviruses subfamily.

The protein localises to the host cytoplasm. Viral serpin that inhibits both cysteine and serine proteinases involved in the regulation of host inflammatory and apoptosis processes. Major anti-apoptotic protein which inhibits both intrinsic and extrinsic pathways and strongly cleaves host CASP1 and CASP8 but is a rather poor inhibitor of host CASP3. Prevents the proteolytic activity of host interleukin-1-beta converting enzyme (ICE) and ICE-like enzymes. Can also block apoptosis through host tumor necrosis factor (TNF) receptor. The inhibition of host ICE is an example of a 'cross-class' interaction, in which a serpin inhibits a non-serine proteinase. Also inhibits granzyme B. The chain is Serine proteinase inhibitor 2 (OPG199) from Homo sapiens (Human).